The chain runs to 916 residues: Protein O-GlcNAcase (916 aa).

The tract at residues methionine 1–glycine 50 is disordered. The region spanning phenylalanine 60 to methionine 336 is the GH84 domain. Residues glycine 67, lysine 98, and aspartate 174 each contribute to the a protein site. Aspartate 175 serves as the catalytic Proton donor. A protein-binding positions include tyrosine 219, tryptophan 278 to asparagine 280, aspartate 285, and asparagine 313. Serine 364 carries the phosphoserine modification. The segment at glutamine 440–aspartate 480 is disordered. 2 stretches are compositionally biased toward basic and acidic residues: residues threonine 452–aspartate 461 and valine 468–aspartate 480.

Belongs to the glycosyl hydrolase 84 family. As to quaternary structure, monomer. Interacts with CLOCK. In terms of processing, proteolytically cleaved by caspase-3 during apoptosis. The fragments interact with each other; cleavage does not decrease enzyme activity. In terms of tissue distribution, detected in spleen (at protein level). Ubiquitous. Expressed at highest levels in the brain and spleen.

Its subcellular location is the nucleus. It localises to the cytoplasm. The catalysed reaction is 3-O-(N-acetyl-beta-D-glucosaminyl)-L-seryl-[protein] + H2O = N-acetyl-D-glucosamine + L-seryl-[protein]. It carries out the reaction 3-O-(N-acetyl-beta-D-glucosaminyl)-L-threonyl-[protein] + H2O = L-threonyl-[protein] + N-acetyl-D-glucosamine. Its activity is regulated as follows. Inhibited by Cu(2+), Hg(2+), Cd(2+) and Zn(2+) at 1 mM. Not inhibited by Co(2+), Mg(2+), Ca(2+), Mn(2+), Fe(3+) and EDTA. Also inhibited by sodium chloride at 1M and 2-amino-2-hydroxymethyl-1,3-propanediol (trishydroxymethylaminomethane) at 75 mM. Its function is as follows. Cleaves GlcNAc but not GalNAc from O-glycosylated proteins. Deglycosylates a large and diverse number of proteins, such as CRYAB, ELK1, GSDMD, LMNB1 and TAB1. Can use p-nitrophenyl-beta-GlcNAc and 4-methylumbelliferone-GlcNAc as substrates but not p-nitrophenyl-beta-GalNAc or p-nitrophenyl-alpha-GlcNAc (in vitro). Does not bind acetyl-CoA and does not have histone acetyltransferase activity. In terms of biological role, lacks enzyme activity. In Rattus norvegicus (Rat), this protein is Protein O-GlcNAcase.